The chain runs to 350 residues: Deoxyhypusine synthase-like protein (350 aa).

It belongs to the deoxyhypusine synthase family.

This is Deoxyhypusine synthase-like protein from Chlorobaculum tepidum (strain ATCC 49652 / DSM 12025 / NBRC 103806 / TLS) (Chlorobium tepidum).